A 126-amino-acid polypeptide reads, in one-letter code: Arginine decarboxylase proenzyme (126 aa).

Catalysis depends on serine 74, which acts as the Schiff-base intermediate with substrate; via pyruvic acid. Residue serine 74 is modified to Pyruvic acid (Ser); by autocatalysis. Histidine 79 serves as the catalytic Proton acceptor; for processing activity. Residue cysteine 94 is the Proton donor; for catalytic activity of the active site.

This sequence belongs to the prokaryotic AdoMetDC family. Type 1 subfamily. Heterooctamer of four alpha and four beta chains arranged as a tetramer of alpha/beta heterodimers. It depends on pyruvate as a cofactor. Is synthesized initially as an inactive proenzyme. Formation of the active enzyme involves a self-maturation process in which the active site pyruvoyl group is generated from an internal serine residue via an autocatalytic post-translational modification. Two non-identical subunits are generated from the proenzyme in this reaction, and the pyruvate is formed at the N-terminus of the alpha chain, which is derived from the carboxyl end of the proenzyme. The post-translation cleavage follows an unusual pathway, termed non-hydrolytic serinolysis, in which the side chain hydroxyl group of the serine supplies its oxygen atom to form the C-terminus of the beta chain, while the remainder of the serine residue undergoes an oxidative deamination to produce ammonia and the pyruvoyl group blocking the N-terminus of the alpha chain.

It catalyses the reaction L-arginine + H(+) = agmatine + CO2. Its pathway is amine and polyamine biosynthesis; agmatine biosynthesis; agmatine from L-arginine: step 1/1. Its function is as follows. Specifically catalyzes the decarboxylation of L-arginine to agmatine. Has no S-adenosylmethionine decarboxylase (AdoMetDC) activity. This chain is Arginine decarboxylase proenzyme, found in Pyrobaculum calidifontis (strain DSM 21063 / JCM 11548 / VA1).